The sequence spans 123 residues: WAP four-disulfide core domain protein 5 (123 aa).

The signal sequence occupies residues Met-1–Gly-24. WAP domains are found at residues Lys-27–Arg-73 and Val-74–Ala-121. Cystine bridges form between Cys-34-Cys-62, Cys-41-Cys-66, Cys-49-Cys-61, Cys-55-Cys-70, Cys-81-Cys-109, Cys-88-Cys-113, Cys-96-Cys-108, and Cys-102-Cys-117.

It localises to the secreted. Putative acid-stable proteinase inhibitor. The chain is WAP four-disulfide core domain protein 5 (WFDC5) from Pongo abelii (Sumatran orangutan).